The primary structure comprises 447 residues: Clusterin (447 aa).

An N-terminal signal peptide occupies residues 1–22; it reads MKTLLLCVGLLLSWERGQVLGD. The Nuclear localization signal motif lies at 77–80; the sequence is KKNK. N85 and N102 each carry an N-linked (GlcNAc...) asparagine glycan. 5 disulfide bridges follow: C101/C311, C112/C303, C115/C300, C120/C293, and C128/C283. The residue at position 132 (S132) is a Phosphoserine. 5 N-linked (GlcNAc...) asparagine glycosylation sites follow: N144, N289, N326, N352, and N372. A Phosphoserine modification is found at S394. The Nuclear localization signal signature appears at 441–445; the sequence is RKKKR.

This sequence belongs to the clusterin family. As to quaternary structure, antiparallel disulfide-linked heterodimer of an alpha chain and a beta chain. Self-associates and forms higher oligomers. Interacts with a broad range of misfolded proteins, including APP, APOC2 and LYZ. Slightly acidic pH promotes interaction with misfolded proteins. Forms high-molecular weight oligomers upon interaction with misfolded proteins. Interacts with APOA1, LRP2, CLUAP1 and PON1. Interacts with the complement membrane attack complex. Interacts (via alpha chain) with XRCC6. Interacts with SYVN1, COMMD1, BTRC, CUL1 and with ubiquitin and SCF (SKP1-CUL1-F-box protein) E3 ubiquitin-protein ligase complexes. Interacts (via alpha chain) with BAX in stressed cells, where BAX undergoes a conformation change leading to association with the mitochondrial membrane. Does not interact with BAX in unstressed cells. Found in a complex with LTF, CLU, EPPIN and SEMG1. Interacts (immaturely glycosylated pre-secreted form) with HSPA5; this interaction promotes CLU stability and facilitates stress-induced CLU retrotranslocation from the secretory pathway to the mitochondria, thereby reducing stress-induced apoptosis by stabilizing mitochondrial membrane integrity. Interacts with BCL2L1; this interaction releases and activates BAX and promotes cell death. Interacts with TGFBR2 and ACVR1. Interacts (secreted form) with STMN3; this interaction may act as an important modulator during neuronal differentiation. Interacts with VLDLR and LRP8. Post-translationally, proteolytically cleaved on its way through the secretory system, probably within the Golgi lumen. Proteolytic cleavage is not necessary for its chaperone activity. All non-secreted forms are not proteolytically cleaved. Chaperone activity of uncleaved forms is dependent on a non-reducing environment. Polyubiquitinated, leading to proteasomal degradation. Under cellular stress, the intracellular level of cleaved form is reduced due to proteasomal degradation. In terms of processing, heavily N-glycosylated. About 30% of the protein mass is comprised of complex N-linked carbohydrate. Endoplasmic reticulum (ER) stress induces changes in glycosylation status and increases level of hypoglycosylated forms. Core carbohydrates are essential for chaperone activity. Non-secreted forms are hypoglycosylated or unglycosylated.

It localises to the secreted. It is found in the nucleus. Its subcellular location is the cytoplasm. The protein localises to the mitochondrion membrane. The protein resides in the cytosol. It localises to the microsome. It is found in the endoplasmic reticulum. Its subcellular location is the mitochondrion. The protein localises to the perinuclear region. The protein resides in the cytoplasmic vesicle. It localises to the secretory vesicle. It is found in the chromaffin granule. Functionally, functions as extracellular chaperone that prevents aggregation of non native proteins. Prevents stress-induced aggregation of blood plasma proteins. Inhibits formation of amyloid fibrils by APP, APOC2, B2M, CALCA, CSN3, SNCA and aggregation-prone LYZ variants (in vitro). Does not require ATP. Maintains partially unfolded proteins in a state appropriate for subsequent refolding by other chaperones, such as HSPA8/HSC70. Does not refold proteins by itself. Binding to cell surface receptors triggers internalization of the chaperone-client complex and subsequent lysosomal or proteasomal degradation. When secreted, protects cells against apoptosis and against cytolysis by complement: inhibits assembly of the complement membrane attack complex (MAC) by preventing polymerization of C9 pore component of the MAC complex. Intracellular forms interact with ubiquitin and SCF (SKP1-CUL1-F-box protein) E3 ubiquitin-protein ligase complexes and promote the ubiquitination and subsequent proteasomal degradation of target proteins. Promotes proteasomal degradation of COMMD1 and IKBKB. Modulates NF-kappa-B transcriptional activity. Following stress, promotes apoptosis. Inhibits apoptosis when associated with the mitochondrial membrane by interference with BAX-dependent release of cytochrome c into the cytoplasm. Plays a role in the regulation of cell proliferation. An intracellular form suppresses stress-induced apoptosis by stabilizing mitochondrial membrane integrity through interaction with HSPA5. Secreted form does not affect caspase or BAX-mediated intrinsic apoptosis and TNF-induced NF-kappa-B-activity. Secreted form act as an important modulator during neuronal differentiation through interaction with STMN3. Plays a role in the clearance of immune complexes that arise during cell injury. This chain is Clusterin (CLU), found in Oryctolagus cuniculus (Rabbit).